We begin with the raw amino-acid sequence, 227 residues long: MECFKTTLAGVVLVVLLLQQAPVLRANDPDPLQDFCVADLDSEVTLNGYPCKPTPAAGDEFLFSSRLATGGDVNANPNGSNVTQLDVAGWPGVNTLGVSMNRIDFAPGGTNPPHVHPRATEVGIVLRGELLVGIIGSLDTGNRYYSRVVRGGETFVIPRGLMHFQFNVGKTEATMVVSFNSQNPGIVFVPLTLFGSNPPIPTPVLVKALRVDAGVVELLKSKFTGGY.

Positions 1 to 26 are cleaved as a signal peptide; it reads MECFKTTLAGVVLVVLLLQQAPVLRA. The cysteines at positions 36 and 51 are disulfide-linked. The Cupin type-1 domain maps to 65–217; that stretch reads SRLATGGDVN…ALRVDAGVVE (153 aa). N-linked (GlcNAc...) asparagine glycans are attached at residues asparagine 78 and asparagine 81. The Mn(2+) site is built by histidine 114, histidine 116, glutamate 121, and histidine 163.

This sequence belongs to the germin family. As to quaternary structure, oligomer (believed to be a pentamer but probably hexamer).

It is found in the secreted. Its subcellular location is the extracellular space. The protein resides in the apoplast. Its function is as follows. May play a role in plant defense. Probably has no oxalate oxidase activity even if the active site is conserved. The sequence is that of Germin-like protein 3-3 from Oryza sativa subsp. japonica (Rice).